A 113-amino-acid chain; its full sequence is MTDMTIPLTFTDAAAKKVKNLIIEEENQDLKLRVYITGGGCSGFQYGFTFDEKVNDGDLTIENDGVKLVIDPMSLQYLIGGTVDYTEGLEGSRFVVHNPNATTTCGCGSSFSI.

C41, C105, and C107 together coordinate iron-sulfur cluster.

This sequence belongs to the HesB/IscA family. In terms of assembly, homodimer. Requires iron-sulfur cluster as cofactor.

In terms of biological role, required for insertion of 4Fe-4S clusters for at least IspG. In Mannheimia succiniciproducens (strain KCTC 0769BP / MBEL55E), this protein is Iron-sulfur cluster insertion protein ErpA.